The chain runs to 100 residues: Urease subunit gamma (100 aa).

The protein belongs to the urease gamma subunit family. In terms of assembly, heterotrimer of UreA (gamma), UreB (beta) and UreC (alpha) subunits. Three heterotrimers associate to form the active enzyme.

Its subcellular location is the cytoplasm. It carries out the reaction urea + 2 H2O + H(+) = hydrogencarbonate + 2 NH4(+). It participates in nitrogen metabolism; urea degradation; CO(2) and NH(3) from urea (urease route): step 1/1. The polypeptide is Urease subunit gamma (Synechococcus sp. (strain CC9605)).